Reading from the N-terminus, the 315-residue chain is Glutamine synthetase nodule isozyme (315 aa).

Positions 19-99 (IIAEYIWVGG…VICDTYTPSG (81 aa)) constitute a GS beta-grasp domain. The 210-residue stretch at 106-315 (KRHAAAKIFS…WGVANRGASI (210 aa)) folds into the GS catalytic domain.

This sequence belongs to the glutamine synthetase family. Homooctamer.

It localises to the cytoplasm. It carries out the reaction L-glutamate + NH4(+) + ATP = L-glutamine + ADP + phosphate + H(+). The protein is Glutamine synthetase nodule isozyme of Lupinus angustifolius (Narrow-leaved blue lupine).